A 353-amino-acid polypeptide reads, in one-letter code: Photosystem II D2 protein (353 aa).

T2 is subject to N-acetylthreonine. T2 is modified (phosphothreonine). The helical transmembrane segment at 41–61 (CAYFALGGWFTGTTFVTSWYT) threads the bilayer. H118 contributes to the chlorophyll a binding site. A helical membrane pass occupies residues 125–141 (GFMLRQFELARSVQLRP). Pheophytin a is bound by residues Q130 and N143. The chain crosses the membrane as a helical span at residues 153-166 (VFVSVFLIYPLGQS). H198 contacts chlorophyll a. A helical transmembrane segment spans residues 208-228 (AALLCAIHGATVENTLFEDGD). 2 residues coordinate a plastoquinone: H215 and F262. H215 provides a ligand contact to Fe cation. A Fe cation-binding site is contributed by H269. Residues 279 to 295 (GLWMSALGVVGLALNLR) traverse the membrane as a helical segment.

Belongs to the reaction center PufL/M/PsbA/D family. In terms of assembly, PSII is composed of 1 copy each of membrane proteins PsbA, PsbB, PsbC, PsbD, PsbE, PsbF, PsbH, PsbI, PsbJ, PsbK, PsbL, PsbM, PsbT, PsbX, PsbY, PsbZ, Psb30/Ycf12, at least 3 peripheral proteins of the oxygen-evolving complex and a large number of cofactors. It forms dimeric complexes. Requires The D1/D2 heterodimer binds P680, chlorophylls that are the primary electron donor of PSII, and subsequent electron acceptors. It shares a non-heme iron and each subunit binds pheophytin, quinone, additional chlorophylls, carotenoids and lipids. There is also a Cl(-1) ion associated with D1 and D2, which is required for oxygen evolution. The PSII complex binds additional chlorophylls, carotenoids and specific lipids. as cofactor.

Its subcellular location is the plastid. The protein resides in the chloroplast thylakoid membrane. The enzyme catalyses 2 a plastoquinone + 4 hnu + 2 H2O = 2 a plastoquinol + O2. Functionally, photosystem II (PSII) is a light-driven water:plastoquinone oxidoreductase that uses light energy to abstract electrons from H(2)O, generating O(2) and a proton gradient subsequently used for ATP formation. It consists of a core antenna complex that captures photons, and an electron transfer chain that converts photonic excitation into a charge separation. The D1/D2 (PsbA/PsbD) reaction center heterodimer binds P680, the primary electron donor of PSII as well as several subsequent electron acceptors. D2 is needed for assembly of a stable PSII complex. In Coffea arabica (Arabian coffee), this protein is Photosystem II D2 protein.